The primary structure comprises 769 residues: Serine/threonine-protein kinase PLK4 (769 aa).

The region spanning 14 to 267 is the Protein kinase domain; it reads YEVQHLLGKG…LEAVLCHPFM (254 aa). ATP contacts are provided by residues 20 to 28 and Lys-43; that span reads LGKGGFATV. Asp-138 serves as the catalytic Proton acceptor. In terms of domain architecture, Cryptic POLO box 1 (CPB1) spans 381–498; that stretch reads EDRISVPPLN…ARFVGLVKSK (118 aa). A Cryptic POLO box 2 (CPB2) domain is found at 499-602; sequence TPKVTYFSTL…GRRPITDVQP (104 aa). The POLO box domain occupies 660–739; sequence PIKRINVPDI…IPNIQLKLKT (80 aa).

This sequence belongs to the protein kinase superfamily. Ser/Thr protein kinase family. CDC5/Polo subfamily. As to quaternary structure, homodimer. In terms of processing, ubiquitinated by the SCF(Slimb) ubiquitin ligase complex; leading to its degradation by the proteasome during interphase and regulating centriole number and ensuring the block to centriole reduplication.

The protein resides in the cytoplasm. Its subcellular location is the cytoskeleton. The protein localises to the microtubule organizing center. It localises to the centrosome. It is found in the centriole. It catalyses the reaction L-seryl-[protein] + ATP = O-phospho-L-seryl-[protein] + ADP + H(+). It carries out the reaction L-threonyl-[protein] + ATP = O-phospho-L-threonyl-[protein] + ADP + H(+). Serine/threonine-protein kinase that plays a central role in centriole duplication. Able to trigger procentriole formation on the surface of the mother centriole cylinder, using mother centriole as a platform, leading to the recruitment of centriole biogenesis proteins such as sas-6. When overexpressed, it is able to induce centrosome amplification through the simultaneous generation of multiple procentrioles adjoining each parental centriole during S phase. Centrosome amplification following overexpression can initiate tumorigenesis, highlighting the importance of centrosome regulation in cancers. This is Serine/threonine-protein kinase PLK4 (SAK) from Drosophila sechellia (Fruit fly).